The chain runs to 916 residues: Protein translocase subunit SecA (916 aa).

ATP is bound by residues Gln-87, 105–109 (GEGKT), and Asp-512. The interval 857–916 (QHAEAPSMEQAVAGEEEELPEGPAPVVPLEPVRNEQKIGRNEPCPCGSGKKYKHCHGQLD) is disordered. Cys-900, Cys-902, Cys-911, and His-912 together coordinate Zn(2+). Residues 906-916 (KKYKHCHGQLD) show a composition bias toward basic residues.

It belongs to the SecA family. Monomer and homodimer. Part of the essential Sec protein translocation apparatus which comprises SecA, SecYEG and auxiliary proteins SecDF-YajC and YidC. Zn(2+) is required as a cofactor.

It localises to the cell inner membrane. The protein resides in the cytoplasm. It carries out the reaction ATP + H2O + cellular proteinSide 1 = ADP + phosphate + cellular proteinSide 2.. Its function is as follows. Part of the Sec protein translocase complex. Interacts with the SecYEG preprotein conducting channel. Has a central role in coupling the hydrolysis of ATP to the transfer of proteins into and across the cell membrane, serving both as a receptor for the preprotein-SecB complex and as an ATP-driven molecular motor driving the stepwise translocation of polypeptide chains across the membrane. This is Protein translocase subunit SecA from Pseudomonas aeruginosa (strain UCBPP-PA14).